The primary structure comprises 212 residues: uncharacterized protein (212 aa).

The protein belongs to the flavoredoxin family. It depends on FMN as a cofactor.

This is an uncharacterized protein from Methanothermobacter thermautotrophicus (strain ATCC 29096 / DSM 1053 / JCM 10044 / NBRC 100330 / Delta H) (Methanobacterium thermoautotrophicum).